The sequence spans 261 residues: Claudin-18 (261 aa).

Residues Met-1 to Cys-6 lie on the Cytoplasmic side of the membrane. A helical transmembrane segment spans residues Gln-7–Met-27. Residues Asp-28–Arg-80 are Extracellular-facing. Residues Ala-81–Leu-101 traverse the membrane as a helical segment. Residues Lys-102 to Gly-122 are Cytoplasmic-facing. The helical transmembrane segment at Ile-123–Leu-143 threads the bilayer. The Extracellular portion of the chain corresponds to Val-144–Ala-174. The helical transmembrane segment at Leu-175–Ala-195 threads the bilayer. The tract at residues Ala-195–Val-261 is required for role in regulation of RANKL-induced osteoclast differentiation. The Cytoplasmic portion of the chain corresponds to Cys-196–Val-261. Position 214 is a phosphoserine (Ser-214). The tract at residues Asp-242–Val-261 is disordered.

It belongs to the claudin family. Interacts with TJP2/ZO-2. Interacts with TJP1/ZO-1. Interacts with YAP1 (phosphorylated); the interaction sequesters YAP1 away from the nucleus and thereby restricts transcription of YAP1 target genes. As to quaternary structure, interacts with CLDN19. As to expression, expression is restricted to the lung. Expression is restricted to the stomach mucosa where it is predominantly observed in the epithelial cells of the pit region and the base of the gastric glands including exocrine and endocrine cells (at protein level).

It is found in the cell junction. It localises to the tight junction. The protein resides in the cell membrane. Its subcellular location is the lateral cell membrane. In terms of biological role, involved in alveolar fluid homeostasis via regulation of alveolar epithelial tight junction composition and therefore ion transport and solute permeability, potentially via downstream regulation of the actin cytoskeleton organization and beta-2-adrenergic signaling. Required for lung alveolarization and maintenance of the paracellular alveolar epithelial barrier. Acts to maintain epithelial progenitor cell proliferation and organ size, via regulation of YAP1 localization away from the nucleus and thereby restriction of YAP1 target gene transcription. Acts as a negative regulator of RANKL-induced osteoclast differentiation, potentially via relocation of TJP2/ZO-2 away from the nucleus, subsequently involved in bone resorption in response to calcium deficiency. Mediates the osteoprotective effects of estrogen, potentially via acting downstream of estrogen signaling independently of RANKL signaling pathways. Functionally, involved in the maintenance of homeostasis of the alveolar microenvironment via regulation of pH and subsequent T-cell activation in the alveolar space, is therefore indirectly involved in limiting C.neoformans infection. Required for the formation of the gastric paracellular barrier via its role in tight junction formation, thereby involved in the response to gastric acidification. This is Claudin-18 (CLDN18) from Homo sapiens (Human).